Consider the following 638-residue polypeptide: Probable glycerol-3-phosphate dehydrogenase, mitochondrial (638 aa).

100–128 serves as a coordination point for FAD; sequence DLIVIGGGATGTGVALDAQSRGMKVALFE.

This sequence belongs to the FAD-dependent glycerol-3-phosphate dehydrogenase family. The cofactor is FAD.

It is found in the mitochondrion. The catalysed reaction is a quinone + sn-glycerol 3-phosphate = dihydroxyacetone phosphate + a quinol. It functions in the pathway polyol metabolism; glycerol degradation via glycerol kinase pathway; glycerone phosphate from sn-glycerol 3-phosphate (anaerobic route): step 1/1. In Dictyostelium discoideum (Social amoeba), this protein is Probable glycerol-3-phosphate dehydrogenase, mitochondrial.